The primary structure comprises 551 residues: Glucose-6-phosphate isomerase (551 aa).

Residues 161 to 162, 212 to 217, glutamine 356, glutamate 360, histidine 391, and lysine 516 contribute to the D-glucose 6-phosphate site; these read GS and SKTFTT. The active-site Proton donor is the glutamate 360. Active-site residues include histidine 391 and lysine 516.

It belongs to the GPI family. As to quaternary structure, homodimer.

The protein localises to the cytoplasm. The protein resides in the cytosol. The enzyme catalyses alpha-D-glucose 6-phosphate = beta-D-fructose 6-phosphate. The protein operates within carbohydrate degradation; glycolysis; D-glyceraldehyde 3-phosphate and glycerone phosphate from D-glucose: step 2/4. Its function is as follows. In the cytoplasm, catalyzes the conversion of glucose-6-phosphate to fructose-6-phosphate, the second step in glycolysis, and the reverse reaction during gluconeogenesis. In Agaricus bisporus (White button mushroom), this protein is Glucose-6-phosphate isomerase (gpi1).